A 1035-amino-acid chain; its full sequence is Glycine dehydrogenase (decarboxylating), mitochondrial (1035 aa).

A mitochondrion-targeting transit peptide spans Met-1 to Ser-64. Lys-771 carries the post-translational modification N6-(pyridoxal phosphate)lysine.

This sequence belongs to the GcvP family. In terms of assembly, homodimer. The glycine cleavage system is composed of four proteins: P, T, L and H. Pyridoxal 5'-phosphate serves as cofactor.

The protein localises to the mitochondrion. The enzyme catalyses N(6)-[(R)-lipoyl]-L-lysyl-[glycine-cleavage complex H protein] + glycine + H(+) = N(6)-[(R)-S(8)-aminomethyldihydrolipoyl]-L-lysyl-[glycine-cleavage complex H protein] + CO2. Functionally, the glycine cleavage system catalyzes the degradation of glycine. The P protein binds the alpha-amino group of glycine through its pyridoxal phosphate cofactor; CO(2) is released and the remaining methylamine moiety is then transferred to the lipoamide cofactor of the H protein. The polypeptide is Glycine dehydrogenase (decarboxylating), mitochondrial (GDCSP) (Solanum tuberosum (Potato)).